Here is a 251-residue protein sequence, read N- to C-terminus: 1-(5-phosphoribosyl)-5-[(5-phosphoribosylamino)methylideneamino] imidazole-4-carboxamide isomerase (251 aa).

Aspartate 8 serves as the catalytic Proton acceptor. The active-site Proton donor is aspartate 129.

It belongs to the HisA/HisF family.

The protein resides in the cytoplasm. It catalyses the reaction 1-(5-phospho-beta-D-ribosyl)-5-[(5-phospho-beta-D-ribosylamino)methylideneamino]imidazole-4-carboxamide = 5-[(5-phospho-1-deoxy-D-ribulos-1-ylimino)methylamino]-1-(5-phospho-beta-D-ribosyl)imidazole-4-carboxamide. It participates in amino-acid biosynthesis; L-histidine biosynthesis; L-histidine from 5-phospho-alpha-D-ribose 1-diphosphate: step 4/9. This Desulfosudis oleivorans (strain DSM 6200 / JCM 39069 / Hxd3) (Desulfococcus oleovorans) protein is 1-(5-phosphoribosyl)-5-[(5-phosphoribosylamino)methylideneamino] imidazole-4-carboxamide isomerase.